A 262-amino-acid polypeptide reads, in one-letter code: Small ribosomal subunit protein eS1 (262 aa).

This sequence belongs to the eukaryotic ribosomal protein eS1 family. In terms of assembly, component of the small ribosomal subunit. Mature ribosomes consist of a small (40S) and a large (60S) subunit. The 40S subunit contains about 33 different proteins and 1 molecule of RNA (18S). The 60S subunit contains about 49 different proteins and 3 molecules of RNA (25S, 5.8S and 5S).

The protein localises to the cytoplasm. This Plasmodium knowlesi (strain H) protein is Small ribosomal subunit protein eS1.